The primary structure comprises 736 residues: Zinc finger MYND domain-containing protein 15 (736 aa).

2 disordered regions span residues 70–94 (SLGQ…DEPP) and 109–192 (LEDG…KNAE). Over residues 110-123 (EDGEEGEEEEEDEE) the composition is skewed to acidic residues. Basic and acidic residues-rich tracts occupy residues 124 to 135 (HGERPGMEKVEP) and 165 to 185 (ASRE…PEKR). Residues cysteine 307, cysteine 310, cysteine 322, cysteine 325, cysteine 331, cysteine 335, histidine 349, and cysteine 353 each contribute to the Zn(2+) site. The MYND-type zinc finger occupies 307–353 (CHVCHKHSFEVKLTPCPQCSAVLYCGEACLQADWRRCPDDVSHRFWC). Disordered stretches follow at residues 556–583 (DGPE…GGRR) and 696–736 (GGTV…RRRR). The segment covering 704 to 718 (GPAPRPPTPAAPPVP) has biased composition (pro residues). The segment covering 719–736 (ARRRRGEKKAARGPRRRR) has biased composition (basic residues).

As to quaternary structure, interacts with HDAC1, HDAC3, HDAC6 and, to a lesser extent, with HDAC7. As to expression, testis-specific. Expressed in pachytene spermatocytes and all developing spermatids, but not in Sertoli, nor Leydig cells (at protein level).

Its subcellular location is the nucleus. The protein localises to the cytoplasm. In terms of biological role, acts as a transcriptional repressor through interaction with histone deacetylases (HDACs). May regulate haploid genes important for spermiogenesis. This is Zinc finger MYND domain-containing protein 15 (Zmynd15) from Mus musculus (Mouse).